The chain runs to 236 residues: 2,3,4,5-tetrahydropyridine-2,6-dicarboxylate N-acetyltransferase (236 aa).

It belongs to the transferase hexapeptide repeat family. DapH subfamily.

The catalysed reaction is (S)-2,3,4,5-tetrahydrodipicolinate + acetyl-CoA + H2O = L-2-acetamido-6-oxoheptanedioate + CoA. It participates in amino-acid biosynthesis; L-lysine biosynthesis via DAP pathway; LL-2,6-diaminopimelate from (S)-tetrahydrodipicolinate (acetylase route): step 1/3. Its function is as follows. Catalyzes the transfer of an acetyl group from acetyl-CoA to tetrahydrodipicolinate. The protein is 2,3,4,5-tetrahydropyridine-2,6-dicarboxylate N-acetyltransferase of Bacillus subtilis (strain 168).